The chain runs to 310 residues: Homoserine kinase (310 aa).

Residue 91–101 (PIGSGLGSSAC) coordinates ATP.

It belongs to the GHMP kinase family. Homoserine kinase subfamily.

Its subcellular location is the cytoplasm. The enzyme catalyses L-homoserine + ATP = O-phospho-L-homoserine + ADP + H(+). It functions in the pathway amino-acid biosynthesis; L-threonine biosynthesis; L-threonine from L-aspartate: step 4/5. Its function is as follows. Catalyzes the ATP-dependent phosphorylation of L-homoserine to L-homoserine phosphate. The chain is Homoserine kinase from Shigella flexneri serotype 5b (strain 8401).